Consider the following 401-residue polypeptide: MKTLKDLGDLKGKRVLVRADFNVPLDGTTITDDGRIKAALPTIKTLREEGAKVILMAHLGRPKGKVVPELSLAPVAARLGELLGANVPLAKDTYGEDAQAKVAAMNDGDVVLLENVRFNPEETSKDADERAAYAKKIAALGEAFVSDGFGVVHRAQGSNYDVAADLPAAAGLLVEKEVKALSKATENPERPFTVVLGGSKVSDKLGVIENLLDKANRLVIGGGMVFTFLKAKGYEVGTSLLEEDQLEKVKGYIETAEKNGVELVLPTDVVVNAGFPAGDTPVAPEVVAADAIPADKMGLDIGPESQKLFHDKIVDSKTVVWNGPMGVFEVPEFAAGTKAVAQGLVDATAAGAFTIVGGGDSASAVRNLGFPEDGFSHISTGGGASLEFLEGKELPGLKVLE.

Residues 20–22 (DFN), Arg35, 58–61 (HLGR), Arg117, and Arg154 each bind substrate. ATP is bound by residues Lys204, Gly298, Glu329, and 358-361 (GGDS).

This sequence belongs to the phosphoglycerate kinase family. Monomer.

The protein resides in the cytoplasm. It carries out the reaction (2R)-3-phosphoglycerate + ATP = (2R)-3-phospho-glyceroyl phosphate + ADP. It functions in the pathway carbohydrate degradation; glycolysis; pyruvate from D-glyceraldehyde 3-phosphate: step 2/5. This chain is Phosphoglycerate kinase, found in Bifidobacterium longum (strain DJO10A).